A 292-amino-acid polypeptide reads, in one-letter code: Phosphatidylserine decarboxylase proenzyme (292 aa).

Residues Asp-89, His-146, and Ser-252 each act as charge relay system; for autoendoproteolytic cleavage activity in the active site. The active-site Schiff-base intermediate with substrate; via pyruvic acid; for decarboxylase activity is Ser-252. Position 252 is a pyruvic acid (Ser); by autocatalysis (Ser-252).

Belongs to the phosphatidylserine decarboxylase family. PSD-B subfamily. Prokaryotic type I sub-subfamily. As to quaternary structure, heterodimer of a large membrane-associated beta subunit and a small pyruvoyl-containing alpha subunit. Pyruvate serves as cofactor. Is synthesized initially as an inactive proenzyme. Formation of the active enzyme involves a self-maturation process in which the active site pyruvoyl group is generated from an internal serine residue via an autocatalytic post-translational modification. Two non-identical subunits are generated from the proenzyme in this reaction, and the pyruvate is formed at the N-terminus of the alpha chain, which is derived from the carboxyl end of the proenzyme. The autoendoproteolytic cleavage occurs by a canonical serine protease mechanism, in which the side chain hydroxyl group of the serine supplies its oxygen atom to form the C-terminus of the beta chain, while the remainder of the serine residue undergoes an oxidative deamination to produce ammonia and the pyruvoyl prosthetic group on the alpha chain. During this reaction, the Ser that is part of the protease active site of the proenzyme becomes the pyruvoyl prosthetic group, which constitutes an essential element of the active site of the mature decarboxylase.

It is found in the cell membrane. The catalysed reaction is a 1,2-diacyl-sn-glycero-3-phospho-L-serine + H(+) = a 1,2-diacyl-sn-glycero-3-phosphoethanolamine + CO2. The protein operates within phospholipid metabolism; phosphatidylethanolamine biosynthesis; phosphatidylethanolamine from CDP-diacylglycerol: step 2/2. In terms of biological role, catalyzes the formation of phosphatidylethanolamine (PtdEtn) from phosphatidylserine (PtdSer). The sequence is that of Phosphatidylserine decarboxylase proenzyme from Shewanella sp. (strain MR-4).